The primary structure comprises 113 residues: Small ribosomal subunit protein bS6 (113 aa).

This sequence belongs to the bacterial ribosomal protein bS6 family.

Functionally, binds together with bS18 to 16S ribosomal RNA. This is Small ribosomal subunit protein bS6 from Wigglesworthia glossinidia brevipalpis.